The primary structure comprises 551 residues: TSKISTTYEEEGRQSKIQPRAFVITRSGPTSRSSSYSARQSYGSRSSITPGVYQQLSSSGITDFRGTREKEKREMQNLNERLAGYIEKVHFLDAQVKKLEAENXXXXXXXXXXXXXXXXXXXXXXXXXXXXXXXXXXXXXXXXXXXXXXXXXXXXXXXXXXXXXXXXXXXXXXXXXXXXXXXXXXXXXXXXXXXXXXXXXXXXXXXXXXXXXXXXXXXXXXXXXXXXXXXXXXXXXXXXXXXXXXXXXXXXXXXXXXXXXXXXXXXMDYAEFWKSELSKCVRDIQSAYDEKIDIIXXXXXXXXXXXXXXXXXXXXXXXMQLQHVQEEVKKLRTQAGEKNAAYAEXXXXXXXXXXXXXXXXXXXXXXXXXXXXXXXXXXXXXXXXXXXXXXXXXXXXXXXXXXXXMELEIACYRKLLEGEESRVGLRSLVEQAIGVQGRGTASLKDTIQQSTASGSMTVQRSSKGPIAFNSVDQSGSNIVIENTTSGARAKTQSLKGWRVDKTVAGRVAASIELKNYDLPPNTKYTIWAKGAKDRATADNEQIADMFSLGVG.

Thr1 bears the N-acetylthreonine mark. The disordered stretch occupies residues 1-54 (TSKISTTYEEEGRQSKIQPRAFVITRSGPTSRSSSYSARQSYGSRSSITPGVYQ). The head stretch occupies residues 1–74 (TSKISTTYEE…RGTREKEKRE (74 aa)). Over residues 25–47 (TRSGPTSRSSSYSARQSYGSRSS) the composition is skewed to low complexity. An IF rod domain is found at 71–423 (EKREMQNLNE…KLLEGEESRV (353 aa)). The tract at residues 75–106 (MQNLNERLAGYIEKVHFLDAQVKKLEAENXXX) is coil 1A. The linker 1 stretch occupies residues 107–120 (XXXXXXXXXXXXXX). Positions 121–258 (XXXXXXXXXX…XXXXXXXXXX (138 aa)) are coil 1B. The tract at residues 259 to 275 (XXXXXXXXMDYAEFWKS) is linker 12. A coil 2 region spans residues 276–423 (ELSKCVRDIQ…KLLEGEESRV (148 aa)). The tail stretch occupies residues 424–551 (GLRSLVEQAI…IADMFSLGVG (128 aa)). Residues 454 to 551 (GSMTVQRSSK…IADMFSLGVG (98 aa)) form the LTD domain.

Belongs to the intermediate filament family. Can form homomers.

The protein resides in the cytoplasm. Its function is as follows. Epithelial intermediate filament protein. The polypeptide is Non-neuronal cytoplasmic intermediate filament protein A (Helix pomatia (Roman snail)).